Reading from the N-terminus, the 180-residue chain is Large ribosomal subunit protein uL6 (180 aa).

The protein belongs to the universal ribosomal protein uL6 family. In terms of assembly, part of the 50S ribosomal subunit.

Its function is as follows. This protein binds to the 23S rRNA, and is important in its secondary structure. It is located near the subunit interface in the base of the L7/L12 stalk, and near the tRNA binding site of the peptidyltransferase center. The polypeptide is Large ribosomal subunit protein uL6 (Clostridium botulinum (strain Loch Maree / Type A3)).